A 38-amino-acid chain; its full sequence is Large ribosomal subunit protein bL36 (38 aa).

This sequence belongs to the bacterial ribosomal protein bL36 family.

The chain is Large ribosomal subunit protein bL36 from Limosilactobacillus fermentum (strain NBRC 3956 / LMG 18251) (Lactobacillus fermentum).